The chain runs to 575 residues: Interleukin-1 receptor-like 2 (575 aa).

The N-terminal stretch at 1 to 19 (MWSLLLCGLSIALPLSVTA) is a signal peptide. Ig-like C2-type domains lie at 20–111 (DGCK…VNLT), 126–211 (PNLS…VLNG), and 222–318 (YGGS…MCHA). The Extracellular portion of the chain corresponds to 20-335 (DGCKDIFMKN…ILQLPAPDFR (316 aa)). N-linked (GlcNAc...) asparagine glycans are attached at residues Asn41, Asn59, Asn109, Asn127, Asn184, Asn234, Asn250, Asn266, and Asn299. Cys42 and Cys95 form a disulfide bridge. Cys146 and Cys195 are oxidised to a cystine. Cys249 and Cys316 are oxidised to a cystine. Residues 336–356 (AYLIGGLIALVAVAVSVVYIY) form a helical membrane-spanning segment. Over 357–575 (NIFKIDIVLW…RRKKCTLTTG (219 aa)) the chain is Cytoplasmic. The 156-residue stretch at 381-536 (KLYDAYVLYP…KFWKTVRYHM (156 aa)) folds into the TIR domain. Residue Glu467 is part of the active site.

Belongs to the interleukin-1 receptor family. As to quaternary structure, interacts with IL1RAP; the association is enhanced by IL36B indicative for an functional signaling complex and inhibited by IL36RN. As to expression, expressed in synovial fibroblasts and articular chondrocytes. Expressed in keratinocytes and monocyte-derived dendritic cells. Expressed in monocytes and myeloid dendritic cells; at protein level.

It localises to the membrane. It catalyses the reaction NAD(+) + H2O = ADP-D-ribose + nicotinamide + H(+). Receptor for interleukin-36 (IL36A, IL36B and IL36G). After binding to interleukin-36 associates with the coreceptor IL1RAP to form the interleukin-36 receptor complex which mediates interleukin-36-dependent activation of NF-kappa-B, MAPK and other pathways. The IL-36 signaling system is thought to be present in epithelial barriers and to take part in local inflammatory response; it is similar to the IL-1 system. Seems to be involved in skin inflammatory response by induction of the IL-23/IL-17/IL-22 pathway. This is Interleukin-1 receptor-like 2 (IL1RL2) from Homo sapiens (Human).